We begin with the raw amino-acid sequence, 326 residues long: D-alanine--D-alanine ligase (326 aa).

In terms of domain architecture, ATP-grasp spans 112–312 (KRIWRFEGLP…YENLCLGILA (201 aa)). 138–193 (LQALGAPMIVKPSREGSTIGLTKVWTAEECDQAYVLASRYDPEVLCEEFIEGDETT) serves as a coordination point for ATP. 3 residues coordinate Mg(2+): D265, E279, and N281.

The protein belongs to the D-alanine--D-alanine ligase family. Requires Mg(2+) as cofactor. It depends on Mn(2+) as a cofactor.

Its subcellular location is the cytoplasm. It carries out the reaction 2 D-alanine + ATP = D-alanyl-D-alanine + ADP + phosphate + H(+). Its pathway is cell wall biogenesis; peptidoglycan biosynthesis. Its function is as follows. Cell wall formation. This Delftia acidovorans (strain DSM 14801 / SPH-1) protein is D-alanine--D-alanine ligase.